We begin with the raw amino-acid sequence, 373 residues long: Cytoplasmic tRNA 2-thiolation protein 1 (373 aa).

It belongs to the TtcA family. CTU1/NCS6/ATPBD3 subfamily.

The protein resides in the cytoplasm. Its pathway is tRNA modification; 5-methoxycarbonylmethyl-2-thiouridine-tRNA biosynthesis. Functionally, plays a central role in 2-thiolation of mcm(5)S(2)U at tRNA wobble positions of tRNA(Lys), tRNA(Glu) and tRNA(Gln). Directly binds tRNAs and probably acts by catalyzing adenylation of tRNAs, an intermediate required for 2-thiolation. It is unclear whether it acts as a sulfurtransferase that transfers sulfur from thiocarboxylated URM1 onto the uridine of tRNAs at wobble position. Prior mcm(5) tRNA modification by the elongator complex is required for 2-thiolation. May also be involved in protein urmylation. The sequence is that of Cytoplasmic tRNA 2-thiolation protein 1 from Eremothecium gossypii (strain ATCC 10895 / CBS 109.51 / FGSC 9923 / NRRL Y-1056) (Yeast).